Reading from the N-terminus, the 546-residue chain is Probable protein kinase UbiB (546 aa).

One can recognise a Protein kinase domain in the interval 124 to 502 (DFEIKPLASA…HVRQGQSRYF (379 aa)). Residues 130-138 (LASASIAQV) and Lys-153 each bind ATP. Asp-288 acts as the Proton acceptor in catalysis. 2 helical membrane passes run 501 to 521 (YFLG…VSRP) and 522 to 542 (EWGL…FVGW).

This sequence belongs to the ABC1 family. UbiB subfamily.

Its subcellular location is the cell inner membrane. The protein operates within cofactor biosynthesis; ubiquinone biosynthesis [regulation]. Functionally, is probably a protein kinase regulator of UbiI activity which is involved in aerobic coenzyme Q (ubiquinone) biosynthesis. This is Probable protein kinase UbiB from Shigella sonnei (strain Ss046).